The following is a 299-amino-acid chain: Taste receptor type 2 member 50 (299 aa).

Position 1 (Met-1) is a topological domain, extracellular. The helical transmembrane segment at 2-22 threads the bilayer; the sequence is ITFLYIFFSILILVLFVLGNF. Over 23–55 the chain is Cytoplasmic; that stretch reads ANGFIALVNFIDWVKRKKISSADQILTALAVSR. Residues 56 to 76 traverse the membrane as a helical segment; sequence IGLLWALLLNWYLTVLNPAFY. Residues 77–87 are Extracellular-facing; sequence SVELRITSYNA. The helical transmembrane segment at 88 to 108 threads the bilayer; the sequence is WVVTNHFSMWLAASLSIFYLL. Topologically, residues 109–126 are cytoplasmic; sequence KIANFSNLIFLHLKRRVR. A helical membrane pass occupies residues 127–147; it reads SVILVILLGTLIFLVCHLLVA. Topologically, residues 148 to 181 are extracellular; the sequence is NMDESMWAEEYEGNMTGKMKLRNTVHLSYLTVTT. N-linked (GlcNAc...) asparagine glycosylation occurs at Asn-161. A helical transmembrane segment spans residues 182–202; the sequence is LWSFIPFTLSLISFLMLICSL. Topologically, residues 203-229 are cytoplasmic; the sequence is CKHLKKMQLHGEGSQDLSTKVHIKALQ. The chain crosses the membrane as a helical span at residues 230-250; it reads TLISFLLLCAIFFLFLIISVW. The Extracellular portion of the chain corresponds to 251–259; the sequence is SPRRLQNDP. The chain crosses the membrane as a helical span at residues 260 to 280; that stretch reads VVMVSKAVGNIYLAFDSFILI. Topologically, residues 281–299 are cytoplasmic; the sequence is WRTKKLKHTFLLILCQIRC.

Belongs to the G-protein coupled receptor T2R family.

It localises to the membrane. In terms of biological role, receptor that may play a role in the perception of bitterness and is gustducin-linked. May play a role in sensing the chemical composition of the gastrointestinal content. The activity of this receptor may stimulate alpha gustducin, mediate PLC-beta-2 activation and lead to the gating of TRPM5. This chain is Taste receptor type 2 member 50 (TAS2R50), found in Gorilla gorilla gorilla (Western lowland gorilla).